The following is a 142-amino-acid chain: Large ribosomal subunit protein uL13 (142 aa).

The protein belongs to the universal ribosomal protein uL13 family. As to quaternary structure, part of the 50S ribosomal subunit.

Its function is as follows. This protein is one of the early assembly proteins of the 50S ribosomal subunit, although it is not seen to bind rRNA by itself. It is important during the early stages of 50S assembly. This Hydrogenovibrio crunogenus (strain DSM 25203 / XCL-2) (Thiomicrospira crunogena) protein is Large ribosomal subunit protein uL13.